The primary structure comprises 1196 residues: FIP1[V]-like protein (1196 aa).

Disordered regions lie at residues 1–102 (MEED…TIPG), 117–248 (GVSQ…SHGY), 268–300 (GAAS…WRPL), 413–472 (GAQG…PRMR), and 485–1174 (SHED…IEGP). The span at 18 to 31 (FQPPVVLPPPPPLP) shows a compositional bias: pro residues. Polar residues predominate over residues 117–126 (GVSQVTTRIE). Residues 129 to 141 (VGGGGDGGYGGQG) are compositionally biased toward gly residues. Acidic residues-rich tracts occupy residues 142-154 (EGDD…EDDL) and 179-190 (NEDDDDEDDEDP). Residues 226–236 (AGKGSGPGGAT) show a composition bias toward gly residues. Residues 268 to 278 (GAASVGGPSSG) show a composition bias toward low complexity. Residues 518–548 (KRPDTESAEHSPAQDEPHKNLLKKQDDEISR) show a composition bias toward basic and acidic residues. Polar residues predominate over residues 549–561 (STDSGQSFRSSSP). Basic and acidic residues-rich tracts occupy residues 565–592 (RGTR…EELK) and 608–641 (GESK…DKHS). The segment covering 643–657 (RPANNRKQYDNNAPH) has biased composition (polar residues). 5 stretches are compositionally biased toward basic and acidic residues: residues 661–673 (KNQD…ERTR), 699–802 (SRED…EKNE), 810–918 (SMSR…DTLR), 925–945 (RRDY…DFSA), and 953–971 (NEKK…KFID). 2 short sequence motifs (nuclear localization signal) span residues 704 to 711 (DKRKERDV) and 734 to 741 (RKRDREDD). A compositionally biased stretch (polar residues) spans 998–1021 (ESLSKQGEQNGSSVVTGSKGTNDA). 3 stretches are compositionally biased toward basic and acidic residues: residues 1046–1071 (DEIH…EDAV), 1103–1137 (KSRD…TVEK), and 1151–1163 (TEKD…KMES).

It belongs to the FIP1 family. In terms of assembly, component of the cleavage and polyadenylation specificity factor (CPSF) complex. Forms a complex with cleavage and polyadenylation specificity factor (CPSF) subunits CFIS1, CFIS2, CPSF30, CSTF50, CSTF64, CSTF77, FIPS3, PABN1, PABN2, PABN3, PAPS4, CFIM25 and PABN1. Binds RNA. In terms of tissue distribution, expressed in leaves, stems, flower tissues and roots.

The protein resides in the nucleus. Its function is as follows. Essential gene. Component of the cleavage and polyadenylation specificity factor (CPSF) complex that plays a key role in pre-mRNA 3'-end formation, recognizing the AAUAAA signal sequence and interacting with poly(A) polymerase and other factors to bring about cleavage and poly(A) addition. FIP1L1 contributes to poly(A) site recognition and stimulates poly(A) addition. Binds to U-rich RNA sequence elements surrounding the poly(A) site. May act to tether poly(A) polymerase to the CPSF complex. In Arabidopsis thaliana (Mouse-ear cress), this protein is FIP1[V]-like protein.